Consider the following 1181-residue polypeptide: HEAT repeat-containing protein 6 (1181 aa).

One copy of the HEAT 1 repeat lies at 159–198; that stretch reads LELLGETGLLMKLSDLAQSDPEVRRAAVHCMANLCLSVPG. Disordered stretches follow at residues 294-347 and 371-407; these read DGRT…PVTG and LDGS…AEGG. The segment covering 300 to 312 has biased composition (polar residues); that stretch reads KPQQSESSASRPT. The segment covering 313–325 has biased composition (basic residues); that stretch reads LNKKKKSKVKPKK. 4 positions are modified to phosphoserine: serine 336, serine 337, serine 399, and serine 402. Residues 383-399 show a composition bias toward low complexity; the sequence is SSPFSSSSWKRVSSSES. 3 HEAT repeats span residues 452–490, 514–552, and 558–595; these read ELGS…GSKQ, SSIR…DAPY, and SLLT…THAP. A disordered region spans residues 613 to 648; sequence NSNSATPHLSPPDWWKKAPAGPSLEETSVSSPKGSS. Threonine 618 bears the Phosphothreonine mark. Residues 637 to 646 are compositionally biased toward polar residues; the sequence is EETSVSSPKG. Serine 643 carries the phosphoserine modification.

The polypeptide is HEAT repeat-containing protein 6 (HEATR6) (Pongo abelii (Sumatran orangutan)).